The following is a 1342-amino-acid chain: DNA-directed RNA polymerase subunit beta (1342 aa).

It belongs to the RNA polymerase beta chain family. As to quaternary structure, the RNAP catalytic core consists of 2 alpha, 1 beta, 1 beta' and 1 omega subunit. When a sigma factor is associated with the core the holoenzyme is formed, which can initiate transcription.

The catalysed reaction is RNA(n) + a ribonucleoside 5'-triphosphate = RNA(n+1) + diphosphate. Its function is as follows. DNA-dependent RNA polymerase catalyzes the transcription of DNA into RNA using the four ribonucleoside triphosphates as substrates. This Serratia proteamaculans (strain 568) protein is DNA-directed RNA polymerase subunit beta.